The following is a 298-amino-acid chain: Putative F-box and FNIP repeat-containing protein R286 (298 aa).

The 45-residue stretch at 4 to 48 (LNVLESHVILHIIEFLPDHEKIKFMSTCKSLYEFRCHVTYNNFYV) folds into the F-box domain. FNIP repeat units lie at residues 124–165 (FNKP…LGHN) and 255–297 (WNFD…FISR).

The polypeptide is Putative F-box and FNIP repeat-containing protein R286 (Acanthamoeba polyphaga (Amoeba)).